A 183-amino-acid chain; its full sequence is Abscisic acid receptor PYL10 (183 aa).

The START-like stretch occupies residues 20–172 (HELVESQCSS…NLNSLADVTE (153 aa)). Cysteine 27 and cysteine 153 form a disulfide bridge. Abscisate-binding positions include lysine 56, 85–90 (ATKSTE), 112–118 (RLKNYSS), and glutamate 137. The Gate loop motif lies at 81 to 85 (SGLPA). A Latch loop motif is present at residues 111-113 (HRL).

Belongs to the PYR/PYL/RCAR abscisic acid intracellular receptor family. Monomer. Forms heterodimer with PYL13, thus antagonizing PP2Cs-binding and ABA-independent inhibition of PP2Cs. Homodimer. Binds ABA on one subunit only. Binds to CARs protein in an ABA-independent manner, both at the plasma membrane and in the nucleus. Interacts with ABI1 and HAB1, and possibly with other PP2Cs, in an ABA-independent manner.

The protein localises to the cytoplasm. It localises to the nucleus. It is found in the cell membrane. Receptor for abscisic acid (ABA) required for ABA-mediated responses such as stomatal closure and germination inhibition. Inhibits the activity of group-A protein phosphatases type 2C (PP2Cs) in an ABA-independent manner but more efficiently when activated by ABA. Can be activated by both (-)-ABA and (+)-ABA. The sequence is that of Abscisic acid receptor PYL10 (PYL10) from Arabidopsis thaliana (Mouse-ear cress).